The primary structure comprises 274 residues: 2,3,4,5-tetrahydropyridine-2,6-dicarboxylate N-succinyltransferase (274 aa).

Substrate-binding residues include Arg-104 and Asp-141.

It belongs to the transferase hexapeptide repeat family. In terms of assembly, homotrimer.

Its subcellular location is the cytoplasm. The catalysed reaction is (S)-2,3,4,5-tetrahydrodipicolinate + succinyl-CoA + H2O = (S)-2-succinylamino-6-oxoheptanedioate + CoA. The protein operates within amino-acid biosynthesis; L-lysine biosynthesis via DAP pathway; LL-2,6-diaminopimelate from (S)-tetrahydrodipicolinate (succinylase route): step 1/3. In Shewanella denitrificans (strain OS217 / ATCC BAA-1090 / DSM 15013), this protein is 2,3,4,5-tetrahydropyridine-2,6-dicarboxylate N-succinyltransferase.